Here is a 1035-residue protein sequence, read N- to C-terminus: Alpha-mannosidase B (1035 aa).

The signal sequence occupies residues 1 to 20 (MGKVLILFLFVLLLITFINC). Residues Asn-19 and Asn-30 are each glycosylated (N-linked (GlcNAc...) asparagine). Zn(2+)-binding residues include His-47 and Asp-49. Asn-63 carries an N-linked (GlcNAc...) asparagine glycan. Zn(2+) is bound at residue Asp-161. The active-site Nucleophile is Asp-161. Asn-245, Asn-250, Asn-270, Asn-309, Asn-327, and Asn-438 each carry an N-linked (GlcNAc...) asparagine glycan. Residue His-446 coordinates Zn(2+). 12 N-linked (GlcNAc...) asparagine glycosylation sites follow: Asn-487, Asn-497, Asn-503, Asn-710, Asn-719, Asn-735, Asn-792, Asn-852, Asn-863, Asn-880, Asn-962, and Asn-993.

This sequence belongs to the glycosyl hydrolase 38 family. The cofactor is Zn(2+).

Its subcellular location is the secreted. It catalyses the reaction Hydrolysis of terminal, non-reducing alpha-D-mannose residues in alpha-D-mannosides.. The polypeptide is Alpha-mannosidase B (manB) (Dictyostelium discoideum (Social amoeba)).